We begin with the raw amino-acid sequence, 528 residues long: Benzoylformate decarboxylase (528 aa).

Residues Q117 and L118 each coordinate Mg(2+). A thiamine pyrophosphate binding region spans residues 377–460; sequence TSTVTAFWQR…IILKNGTYGA (84 aa). Ca(2+) contacts are provided by D428, N455, and T457.

It belongs to the TPP enzyme family. Homotetramer. Ca(2+) is required as a cofactor. It depends on thiamine diphosphate as a cofactor. Requires Mg(2+) as cofactor.

The catalysed reaction is phenylglyoxylate + H(+) = benzaldehyde + CO2. The protein operates within aromatic compound metabolism; (R)-mandelate degradation; benzoate from (R)-mandelate: step 3/4. In Pseudomonas aeruginosa (strain ATCC 15692 / DSM 22644 / CIP 104116 / JCM 14847 / LMG 12228 / 1C / PRS 101 / PAO1), this protein is Benzoylformate decarboxylase (mdlC).